The chain runs to 793 residues: RNA-binding protein spenito (793 aa).

2 disordered regions span residues 1 to 93 (MSSH…PPAE) and 243 to 296 (HHDY…KKDK). Residues 25 to 42 (SRSPGPASRSSLSRNSRS) are compositionally biased toward low complexity. The span at 257–268 (RGGHPHHLHGHA) shows a compositional bias: basic residues. Positions 285 to 296 (APYEKPESKKDK) are enriched in basic and acidic residues. RRM domains are found at residues 314-391 (RTLF…YGKV) and 395-469 (TRMW…FAEL). The segment at 507–623 (YAPRGGYSPY…RNDALASAST (117 aa)) is disordered. Positions 526–536 (GGYRGRGRGMY) are enriched in basic residues. A compositionally biased stretch (basic and acidic residues) spans 566–593 (DEWRRPPGESYDRGARSSSREPGVERSR). The region spanning 624-791 (VPDVARKCST…HLVIVVVRGG (168 aa)) is the SPOC domain.

It belongs to the RRM Spen family. In terms of assembly, component of the WMM complex, a N6-methyltransferase complex composed of a catalytic subcomplex, named MAC, and of an associated subcomplex, named MACOM. The MAC subcomplex is composed of Ime4/Mettl3 and Mettl14. The MACOM subcomplex is composed of fl(2)d, Flacc/Xio, Hakai, vir, and, in some cases of nito. Interacts with Sxl. Interacts with Hipk; leading to phosphorylation. Post-translationally, phosphorylated by Hipk at Ser-23, Ser-25 and/or Ser-27; the precise position if phosphorylation sites is unknown. In terms of tissue distribution, widely expressed. Shows some enrichment in the central nervous system.

The protein resides in the nucleus. RNA-binding protein that acts as an associated component of the WMM complex, a complex that mediates N6-methyladenosine (m6A) methylation of mRNAs. M6a modification plays a role in the efficiency of mRNA splicing and is required for sex determination. In the WMM complex, may act by binding target RNAs and recruiting the WMM complex. Required for sex determination and dosage compensation via Sxl alternative splicing: m6A methylation acts as a key regulator of Sxl pre-mRNA and promotes female-specific alternative splicing of Sxl, which determines female physiognomy. M6A methylation is also required for neuronal functions. Acts as a positive regulator of canonical Wg signaling during wing disk and eye development. The protein is RNA-binding protein spenito of Drosophila melanogaster (Fruit fly).